A 272-amino-acid chain; its full sequence is Alkaline ceramidase (272 aa).

A run of 2 helical transmembrane segments spans residues 34–54 (FANT…IMLL) and 61–81 (VNGG…ASTY). Histidine 83 serves as a coordination point for Zn(2+). Helical transmembrane passes span 96–116 (LSLV…MKWF), 124–144 (LTLV…LCFL), 148–168 (LNAI…NYEG), and 183–203 (ILAL…LCDF). 2 residues coordinate Zn(2+): histidine 213 and histidine 217. Residues 214 to 234 (ALFHLLAGLAGYTIFIMFSMI) form a helical membrane-spanning segment. A glycan (N-linked (GlcNAc...) asparagine) is linked at asparagine 256.

It belongs to the alkaline ceramidase family. Zn(2+) is required as a cofactor.

It localises to the membrane. The enzyme catalyses an N-acyl-sphingoid base + H2O = a sphingoid base + a fatty acid. It catalyses the reaction an N-acylsphing-4-enine + H2O = sphing-4-enine + a fatty acid. The catalysed reaction is an N-acyl-15-methylhexadecasphing-4-enine + H2O = 15-methylhexadecasphing-4-enine + a fatty acid. The protein operates within lipid metabolism; sphingolipid metabolism. In terms of biological role, hydrolyzes the sphingolipid ceramide into sphingoid base and free fatty acid. C.elegans contain specific sphingoid bases, which are unique or different in structure compared to the sphingoid bases found in other animals. Two examples of these distinctive compounds are: 15-methylhexadecasphinganine and 15-methylhexadecasphing-4-enine. This chain is Alkaline ceramidase, found in Caenorhabditis elegans.